Consider the following 417-residue polypeptide: MELEKRLKEKLEAPTLDYEKYFSEKALGMKASEIRELLKLVETSDVISLAGGLPAPETFPVEIIGEITKEVLEKHAAQALQYGTTKGFTPLRLALAEWMRERYDIPISKVDIMTTSGSQQALDLIGRVFINPGDIIVVEAPTYLAALQAFKYYEPEFVQIPLDDEGMNVDLLEEKLQELEKEGKKVKIVYTIPTFQNPAGVTMNEKRRKRLLELASQYDFIIVEDNPYGELRYSGEPVKPIKAWDEEGRVIYLGTFSKILAPGFRIGWIAAEPHFIRKLEIAKQSVDLCTNTFSQVIAWKYVEGGYLDKHIPKIIEFYKPRRDAMLKALEEFMPDGVKWTKPEGGMFVWATLPEGIDTKLMLEKAVAKGVAYVPGEAFFAHRDVKNTMRLNFTYVPEEKIREGIKRLAETIKEEMKK.

At Lys-258 the chain carries N6-(pyridoxal phosphate)lysine.

Belongs to the class-I pyridoxal-phosphate-dependent aminotransferase family. Homodimer. Requires pyridoxal 5'-phosphate as cofactor.

The enzyme catalyses an aromatic L-alpha-amino acid + 2-oxoglutarate = an aromatic oxo-acid + L-glutamate. Functionally, catalyzes the transamination of phenylalanine, tyrosine and tryptophan. Shows virtually no activity towards aspartic acid, alanine, valine or isoleucine. This chain is Aromatic-amino-acid aminotransferase 1, found in Thermococcus litoralis (strain ATCC 51850 / DSM 5473 / JCM 8560 / NS-C).